The sequence spans 324 residues: CYFIP-related Rac1 interactor B (324 aa).

The N-myristoyl glycine moiety is linked to residue glycine 2. Residue lysine 74 forms a Glycyl lysine isopeptide (Lys-Gly) (interchain with G-Cter in ubiquitin) linkage.

Belongs to the CYRI family. Interacts with RAC1 (GTP-bound form preferentially). In terms of processing, ubiquitinated at Lys-74 upon Salmonella bacterial infection. In terms of tissue distribution, expressed in pancreatic ducts (at protein level).

It localises to the membrane. The protein resides in the mitochondrion. Its function is as follows. Negatively regulates RAC1 signaling and RAC1-driven cytoskeletal remodeling. Regulates chemotaxis, cell migration and epithelial polarization by controlling the polarity, plasticity, duration and extent of protrusions. Limits Rac1 mediated activation of the Scar/WAVE complex, focuses protrusion signals and regulates pseudopod complexity by inhibiting Scar/WAVE-induced actin polymerization. Protects against Salmonella bacterial infection. Attenuates processes such as macropinocytosis, phagocytosis and cell migration and restrict sopE-mediated bacterial entry. Also restricts infection mediated by Mycobacterium tuberculosis and Listeria monocytogenes. Involved in the regulation of mitochondrial dynamics and oxidative stress. The sequence is that of CYFIP-related Rac1 interactor B (Cyrib) from Mus musculus (Mouse).